A 490-amino-acid polypeptide reads, in one-letter code: Glutamyl-tRNA(Gln) amidotransferase subunit A (490 aa).

Residues Lys-80 and Ser-155 each act as charge relay system in the active site. Ser-179 (acyl-ester intermediate) is an active-site residue.

This sequence belongs to the amidase family. GatA subfamily. Heterotrimer of A, B and C subunits.

It catalyses the reaction L-glutamyl-tRNA(Gln) + L-glutamine + ATP + H2O = L-glutaminyl-tRNA(Gln) + L-glutamate + ADP + phosphate + H(+). Its function is as follows. Allows the formation of correctly charged Gln-tRNA(Gln) through the transamidation of misacylated Glu-tRNA(Gln) in organisms which lack glutaminyl-tRNA synthetase. The reaction takes place in the presence of glutamine and ATP through an activated gamma-phospho-Glu-tRNA(Gln). This is Glutamyl-tRNA(Gln) amidotransferase subunit A from Brevibacillus brevis (strain 47 / JCM 6285 / NBRC 100599).